The following is a 311-amino-acid chain: Probable manganese-dependent inorganic pyrophosphatase (311 aa).

Mn(2+) contacts are provided by histidine 9, aspartate 13, aspartate 15, aspartate 77, histidine 99, and aspartate 151.

It belongs to the PPase class C family. In terms of assembly, homodimer. Mn(2+) serves as cofactor.

It is found in the cytoplasm. It catalyses the reaction diphosphate + H2O = 2 phosphate + H(+). This Streptococcus gordonii (strain Challis / ATCC 35105 / BCRC 15272 / CH1 / DL1 / V288) protein is Probable manganese-dependent inorganic pyrophosphatase (ppaC).